A 218-amino-acid chain; its full sequence is Uridine kinase (218 aa).

Gly16–Thr23 contacts ATP.

Belongs to the uridine kinase family.

Its subcellular location is the cytoplasm. It carries out the reaction uridine + ATP = UMP + ADP + H(+). It catalyses the reaction cytidine + ATP = CMP + ADP + H(+). It participates in pyrimidine metabolism; CTP biosynthesis via salvage pathway; CTP from cytidine: step 1/3. Its pathway is pyrimidine metabolism; UMP biosynthesis via salvage pathway; UMP from uridine: step 1/1. The polypeptide is Uridine kinase (Limosilactobacillus reuteri (strain DSM 20016) (Lactobacillus reuteri)).